The sequence spans 304 residues: Killer cell immunoglobulin-like receptor 2DS4 (304 aa).

The signal sequence occupies residues 1-21 (MSLMVIIMACVGFFLLQGAWP). Over 22-245 (QEGVHRKPSF…SKTGNPRHLH (224 aa)) the chain is Extracellular. Ig-like C2-type domains follow at residues 42-107 (EETV…VPHS) and 142-205 (GENV…FRDA). The cysteines at positions 49 and 100 are disulfide-linked. N-linked (GlcNAc...) asparagine glycosylation is found at Asn67, Asn84, Asn144, Asn178, and Asn211. A disulfide bond links Cys149 and Cys198. Residues 220–239 (VTGNPSNSWPSPTEPSSKTG) form a disordered region. The helical transmembrane segment at 246–265 (VLIGTSVVKIPFTILLFFLL) threads the bilayer. Residues 266–304 (HRWCSDKKNAAVMDQEPAGNRTVNSEDSDEQDHQEVSYA) are Cytoplasmic-facing. A disordered region spans residues 280-304 (QEPAGNRTVNSEDSDEQDHQEVSYA).

This sequence belongs to the immunoglobulin superfamily. As to quaternary structure, interacts with HLA-F; this interaction is direct.

It is found in the cell membrane. Its function is as follows. Receptor on natural killer (NK) cells for HLA-C alleles. Does not inhibit the activity of NK cells. This chain is Killer cell immunoglobulin-like receptor 2DS4, found in Homo sapiens (Human).